Consider the following 338-residue polypeptide: Aspartate carbamoyltransferase catalytic subunit (338 aa).

Residues Arg-72 and Thr-73 each contribute to the carbamoyl phosphate site. Lys-100 lines the L-aspartate pocket. Carbamoyl phosphate contacts are provided by Arg-122, His-152, and Gln-155. Residues Arg-186 and Arg-243 each coordinate L-aspartate. Gly-284 and Pro-285 together coordinate carbamoyl phosphate.

This sequence belongs to the aspartate/ornithine carbamoyltransferase superfamily. ATCase family. In terms of assembly, heterododecamer (2C3:3R2) of six catalytic PyrB chains organized as two trimers (C3), and six regulatory PyrI chains organized as three dimers (R2).

It catalyses the reaction carbamoyl phosphate + L-aspartate = N-carbamoyl-L-aspartate + phosphate + H(+). It functions in the pathway pyrimidine metabolism; UMP biosynthesis via de novo pathway; (S)-dihydroorotate from bicarbonate: step 2/3. Its function is as follows. Catalyzes the condensation of carbamoyl phosphate and aspartate to form carbamoyl aspartate and inorganic phosphate, the committed step in the de novo pyrimidine nucleotide biosynthesis pathway. This Acinetobacter baumannii (strain SDF) protein is Aspartate carbamoyltransferase catalytic subunit.